The primary structure comprises 89 residues: Large ribosomal subunit protein eL34 (89 aa).

Residues 1–32 form a disordered region; the sequence is MPAPRFKSGSFKKISKRGPGNKTLTHHRRSKV.

This sequence belongs to the eukaryotic ribosomal protein eL34 family.

The chain is Large ribosomal subunit protein eL34 from Methanococcus aeolicus (strain ATCC BAA-1280 / DSM 17508 / OCM 812 / Nankai-3).